A 444-amino-acid chain; its full sequence is Citrate-proton symporter (444 aa).

The Cytoplasmic segment spans residues 1-41; the sequence is MPTARCSMRASSTAPVRMMATAGGARIGAILRVTSGNFLEQ. The chain crosses the membrane as a helical span at residues 42 to 62; sequence FDFFLFGFYATYIAHTFFPAS. Residues 63 to 72 lie on the Periplasmic side of the membrane; sequence SEFASLMMTF. The chain crosses the membrane as a helical span at residues 73–93; sequence AVFGAGFLMRPIGAIVLGAYI. The Cytoplasmic segment spans residues 94 to 114; the sequence is DKVGRRKGLIVTLSIMATGTF. A helical transmembrane segment spans residues 115–135; it reads LIVLIPSYQTIGLWAPLLVLI. Residues 136 to 137 lie on the Periplasmic side of the membrane; sequence GR. Residues 138–158 form a helical membrane-spanning segment; that stretch reads LLQGFSAGAELGGVSVYLAEI. Topologically, residues 159–177 are cytoplasmic; sequence ATPGRKGFYTSWQSGSQQV. Residues 178–198 form a helical membrane-spanning segment; that stretch reads AIMVAAAMGFALNAVLEPSAI. Position 199 (S199) is a topological domain, periplasmic. The chain crosses the membrane as a helical span at residues 200–220; sequence DWGWRIPFLFGVLIVPFIFIL. Residues 221–251 lie on the Cytoplasmic side of the membrane; that stretch reads RRKLEETQEFTARRHHLAMRQVFATLLANWQ. Residues 252-272 traverse the membrane as a helical segment; that stretch reads VVIAGMMMVAMTTTAFYLITV. The Periplasmic segment spans residues 273–289; the sequence is YAPTFGKKVLMLSASDS. Residues 290 to 310 form a helical membrane-spanning segment; sequence LLVTLLVAISNFFWLPVGGAL. The Cytoplasmic portion of the chain corresponds to 311 to 318; sequence SDRFGRRS. Residues 319–339 traverse the membrane as a helical segment; that stretch reads VLIAMTLLALATAWPALTMLA. Position 340 (N340) is a topological domain, periplasmic. Residues 341–361 form a helical membrane-spanning segment; sequence APSFLMMLSVLLWLSFIYGMY. Topologically, residues 362 to 379 are cytoplasmic; the sequence is NGAMIPALTEIMPAEVRV. Residues 380–400 traverse the membrane as a helical segment; that stretch reads AGFSLAYSLATAVFGGFTPVI. The Periplasmic segment spans residues 401-411; it reads STALIEYTGDK. A helical transmembrane segment spans residues 412–432; that stretch reads ASPGYWMSFAAICGLLATCYL. Residues 433-444 lie on the Cytoplasmic side of the membrane; the sequence is YRRSAVALQTAR.

This sequence belongs to the major facilitator superfamily. Metabolite:H+ Symporter (MHS) family (TC 2.A.1.6) family.

Its subcellular location is the cell inner membrane. Functionally, uptake of citrate across the boundary membrane with the concomitant transport of protons into the cell (symport system). In Klebsiella pneumoniae, this protein is Citrate-proton symporter (citH).